A 178-amino-acid polypeptide reads, in one-letter code: Large ribosomal subunit protein uL6c (178 aa).

Belongs to the universal ribosomal protein uL6 family. Part of the 50S ribosomal subunit.

It is found in the plastid. It localises to the chloroplast. Its function is as follows. Binds 23S rRNA. The polypeptide is Large ribosomal subunit protein uL6c (rpl6) (Phaeodactylum tricornutum (strain CCAP 1055/1)).